The primary structure comprises 217 residues: Hypersensitivity response secretion protein HrcR (217 aa).

4 consecutive transmembrane segments (helical) span residues 6–26 (FASL…AMVV), 52–72 (MVLN…VGME), 158–178 (IGFL…NLLM), and 190–210 (VAIP…VLIH).

Belongs to the FliP/MopC/SpaP family.

The protein resides in the cell membrane. Involved in the secretion of PopA, a proteinaceous elicitor of the hypersensitivity response in plants. The protein is Hypersensitivity response secretion protein HrcR (hrcR) of Ralstonia nicotianae (strain ATCC BAA-1114 / GMI1000) (Ralstonia solanacearum).